Here is a 574-residue protein sequence, read N- to C-terminus: Proline--tRNA ligase (574 aa).

It belongs to the class-II aminoacyl-tRNA synthetase family. ProS type 1 subfamily. Homodimer.

The protein localises to the cytoplasm. It catalyses the reaction tRNA(Pro) + L-proline + ATP = L-prolyl-tRNA(Pro) + AMP + diphosphate. Functionally, catalyzes the attachment of proline to tRNA(Pro) in a two-step reaction: proline is first activated by ATP to form Pro-AMP and then transferred to the acceptor end of tRNA(Pro). As ProRS can inadvertently accommodate and process non-cognate amino acids such as alanine and cysteine, to avoid such errors it has two additional distinct editing activities against alanine. One activity is designated as 'pretransfer' editing and involves the tRNA(Pro)-independent hydrolysis of activated Ala-AMP. The other activity is designated 'posttransfer' editing and involves deacylation of mischarged Ala-tRNA(Pro). The misacylated Cys-tRNA(Pro) is not edited by ProRS. This Teredinibacter turnerae (strain ATCC 39867 / T7901) protein is Proline--tRNA ligase.